The primary structure comprises 317 residues: Ribosomal RNA small subunit methyltransferase H (317 aa).

Residues 36–38 (GGH), Asp-56, Phe-80, Asp-102, and Gln-109 contribute to the S-adenosyl-L-methionine site.

It belongs to the methyltransferase superfamily. RsmH family.

Its subcellular location is the cytoplasm. It catalyses the reaction cytidine(1402) in 16S rRNA + S-adenosyl-L-methionine = N(4)-methylcytidine(1402) in 16S rRNA + S-adenosyl-L-homocysteine + H(+). Functionally, specifically methylates the N4 position of cytidine in position 1402 (C1402) of 16S rRNA. The chain is Ribosomal RNA small subunit methyltransferase H from Baumannia cicadellinicola subsp. Homalodisca coagulata.